Reading from the N-terminus, the 198-residue chain is Transcription factor FapR (198 aa).

Residues 102 to 168 (TRIARGHHLF…GRTVVDVNSY (67 aa)) enclose the MaoC-like domain.

The protein belongs to the FapR family.

In terms of biological role, transcriptional factor involved in regulation of membrane lipid biosynthesis by repressing genes involved in fatty acid and phospholipid metabolism. The polypeptide is Transcription factor FapR (Geobacillus thermodenitrificans (strain NG80-2)).